The following is a 440-amino-acid chain: V-type ATP synthase beta chain (440 aa).

The protein belongs to the ATPase alpha/beta chains family.

In terms of biological role, produces ATP from ADP in the presence of a proton gradient across the membrane. The V-type beta chain is a regulatory subunit. The sequence is that of V-type ATP synthase beta chain from Geotalea uraniireducens (strain Rf4) (Geobacter uraniireducens).